A 111-amino-acid polypeptide reads, in one-letter code: Large ribosomal subunit protein eL33z (111 aa).

Belongs to the eukaryotic ribosomal protein eL33 family.

The sequence is that of Large ribosomal subunit protein eL33z (RPL35AB) from Arabidopsis thaliana (Mouse-ear cress).